A 455-amino-acid chain; its full sequence is MALNVVILAAGKGTRMRSELPKVLHPIAHKSMVQHVIDTAHSVGSDAIQLVYGYGAEKLQSVLGEQQLNWVLQAEQLGTGHAVAQANDNIGDDDTVLILYGDVPLIQASTLEALLAAREDNGLAILTVNLANPMGYGRIVREANKVVGIVEQKDASAEQLAINEINTGIMAAPGKQLKAWLGQLSSDNAQGEYYLTDIVAMAHKDGVEITTAQPESAIEVEGANNRVQLAQLERAYQARAAEKLMLEGANLRDPARLDIRGDVTVGMDVMIDINVIIQGKVTIGNNVTIGAGAILIDCEIGDNAEIKPYSIVENAKLGVEASAGPFARLRPGAELKRDAHIGNFVEMKKAVLGEGSKAGHLAYIGDAQIGCGVNIGAGTITCNYDGANKHLTVIEDNVFVGSDTQLVAPVTIGKGATLGAGSTITSNVAEGELVITRVKQRHLTGWARPVKKPKS.

Residues 1–226 (MALNVVILAA…AIEVEGANNR (226 aa)) form a pyrophosphorylase region. Residues 8–11 (LAAG), lysine 22, glutamine 73, 78–79 (GT), 100–102 (YGD), glycine 137, glutamate 151, asparagine 166, and asparagine 224 contribute to the UDP-N-acetyl-alpha-D-glucosamine site. Residue aspartate 102 participates in Mg(2+) binding. Asparagine 224 serves as a coordination point for Mg(2+). Positions 227–247 (VQLAQLERAYQARAAEKLMLE) are linker. The interval 248–455 (GANLRDPARL…WARPVKKPKS (208 aa)) is N-acetyltransferase. Positions 330 and 348 each coordinate UDP-N-acetyl-alpha-D-glucosamine. Histidine 360 (proton acceptor) is an active-site residue. UDP-N-acetyl-alpha-D-glucosamine is bound by residues tyrosine 363 and asparagine 374. Acetyl-CoA is bound by residues alanine 377, 383–384 (NY), serine 402, alanine 420, and arginine 437.

The protein in the N-terminal section; belongs to the N-acetylglucosamine-1-phosphate uridyltransferase family. In the C-terminal section; belongs to the transferase hexapeptide repeat family. Homotrimer. Requires Mg(2+) as cofactor.

The protein localises to the cytoplasm. It catalyses the reaction alpha-D-glucosamine 1-phosphate + acetyl-CoA = N-acetyl-alpha-D-glucosamine 1-phosphate + CoA + H(+). The catalysed reaction is N-acetyl-alpha-D-glucosamine 1-phosphate + UTP + H(+) = UDP-N-acetyl-alpha-D-glucosamine + diphosphate. The protein operates within nucleotide-sugar biosynthesis; UDP-N-acetyl-alpha-D-glucosamine biosynthesis; N-acetyl-alpha-D-glucosamine 1-phosphate from alpha-D-glucosamine 6-phosphate (route II): step 2/2. Its pathway is nucleotide-sugar biosynthesis; UDP-N-acetyl-alpha-D-glucosamine biosynthesis; UDP-N-acetyl-alpha-D-glucosamine from N-acetyl-alpha-D-glucosamine 1-phosphate: step 1/1. It functions in the pathway bacterial outer membrane biogenesis; LPS lipid A biosynthesis. Functionally, catalyzes the last two sequential reactions in the de novo biosynthetic pathway for UDP-N-acetylglucosamine (UDP-GlcNAc). The C-terminal domain catalyzes the transfer of acetyl group from acetyl coenzyme A to glucosamine-1-phosphate (GlcN-1-P) to produce N-acetylglucosamine-1-phosphate (GlcNAc-1-P), which is converted into UDP-GlcNAc by the transfer of uridine 5-monophosphate (from uridine 5-triphosphate), a reaction catalyzed by the N-terminal domain. This is Bifunctional protein GlmU from Shewanella sediminis (strain HAW-EB3).